The primary structure comprises 415 residues: Protein-lysine N-trimethyltransferase SMYD5 (415 aa).

Residues 20–351 enclose the SET domain; the sequence is NCVDVRFINN…PGEEICISYL (332 aa). The MYND-type zinc-finger motif lies at 95 to 135; that stretch reads PHPELCKVRPDRHQACPQCQVMYCSSECRQAAMDQYHKILC. Residue Tyr350 coordinates S-adenosyl-L-methionine. Residues 388–415 form a disordered region; the sequence is DMTSEDEEEVEGEGETEGEDMEDEMTDV.

Belongs to the class V-like SAM-binding methyltransferase superfamily. As to expression, expressed at high levels in the ovary and at lower levels in the fin, testis and brain.

It localises to the cytoplasm. It carries out the reaction L-lysyl-[protein] + 3 S-adenosyl-L-methionine = N(6),N(6),N(6)-trimethyl-L-lysyl-[protein] + 3 S-adenosyl-L-homocysteine + 3 H(+). The catalysed reaction is L-lysyl(20)-[histone H4] + 3 S-adenosyl-L-methionine = N(6),N(6),N(6)-trimethyl-L-lysyl(20)-[histone H4] + 3 S-adenosyl-L-homocysteine + 3 H(+). It catalyses the reaction L-lysyl(36)-[histone H3] + 3 S-adenosyl-L-methionine = N(6),N(6),N(6)-trimethyl-L-lysyl(36)-[histone H3] + 3 S-adenosyl-L-homocysteine + 3 H(+). Its function is as follows. Protein-lysine N-trimethyltransferase that specifically catalyzes trimethylation of 'Lys-22' of the RPL40/eL40 subunit of the 60S ribosome, thereby promoting translation elongation and protein synthesis. May also act as a histone methyltransferase in the context of histone octamers, but not on nucleosome substrates: trimethylates 'Lys-36' of histone H3 and 'Lys-20' of histone H4 to form H3K36me3 and H4K20me3, respectively. The histone methyltransferase activity, which is independent of its SET domain, is however unsure in vivo. Plays a crucial role in hematopoiesis during embryogenesis by negatively regulating expression of genes related to both primitive and definitive hematopoiesis. The sequence is that of Protein-lysine N-trimethyltransferase SMYD5 from Danio rerio (Zebrafish).